The sequence spans 357 residues: Protein phosphatase 1 regulatory subunit 42 (357 aa).

LRR repeat units follow at residues 29 to 50 (KITH…SLCR), 51 to 72 (NLSV…NYTT), 73 to 94 (NLTH…SSLK), 95 to 116 (KLEK…EGLE), 117 to 138 (ELRE…LFDP), 147 to 168 (SLST…EILE), and 169 to 190 (NLNH…ELLL). In terms of domain architecture, LRRCT spans 204-242 (NPVCLKPKYRDKLILTSKSLEFLDGKEIKDMERQFLMNW). A disordered region spans residues 329 to 357 (ESSLTKNDIHEPHLLQNPKVKENLSEKKE). Over residues 335–357 (NDIHEPHLLQNPKVKENLSEKKE) the composition is skewed to basic and acidic residues.

In terms of assembly, interacts with PPP1CC isoform gamma-2; the interaction is direct. Interacts with actin, dynein, KIF5B, KIFC1 and tubulin. Associates with microtubules. Post-translationally, phosphorylated; during the first round of spermatogenesis with a marginal increase at 21 days after birth. Testis-specific. Expressed in spermatids (at protein level). Testis-specific.

The protein localises to the cytoplasm. It localises to the cytoskeleton. It is found in the microtubule organizing center. Its subcellular location is the centrosome. Its function is as follows. Regulates phosphatase activity of protein phosphatase 1 (PP1) complexes in the testis. This Mus musculus (Mouse) protein is Protein phosphatase 1 regulatory subunit 42 (Ppp1r42).